Consider the following 71-residue polypeptide: Disintegrin simusmin (71 aa).

In terms of domain architecture, Disintegrin spans 1 to 71; sequence AGEECDCGSP…SADCPRNPFH (71 aa). Intrachain disulfides connect cysteine 5/cysteine 20, cysteine 7/cysteine 15, cysteine 14/cysteine 37, cysteine 28/cysteine 34, cysteine 33/cysteine 58, and cysteine 46/cysteine 65. The Cell attachment site motif lies at 50–52; that stretch reads RGD.

This sequence belongs to the venom metalloproteinase (M12B) family. P-II subfamily. P-IIa sub-subfamily. As to quaternary structure, monomer. In terms of tissue distribution, expressed by the venom gland.

The protein localises to the secreted. Its function is as follows. Inhibits ADP- (IC(50)=56 nM) and collagen-induced (IC(50)=49 nM) aggregation of human platelets. In vitro, inhibits adhesion of endothelial cells to vitronectin, type-I collagen and, to a lower degree, fibronectin and laminin. This is Disintegrin simusmin from Crotalus simus (Central American rattlesnake).